The following is a 357-amino-acid chain: Anthranilate phosphoribosyltransferase (357 aa).

5-phospho-alpha-D-ribose 1-diphosphate-binding positions include G94, 97-98 (GD), T102, 104-107 (NLST), 122-130 (KHGNRAASS), and G134. Anthranilate is bound at residue G94. A Mg(2+)-binding site is contributed by S106. N125 is an anthranilate binding site. Residue R180 coordinates anthranilate. Positions 238 and 239 each coordinate Mg(2+).

The protein belongs to the anthranilate phosphoribosyltransferase family. Homodimer. Requires Mg(2+) as cofactor.

It catalyses the reaction N-(5-phospho-beta-D-ribosyl)anthranilate + diphosphate = 5-phospho-alpha-D-ribose 1-diphosphate + anthranilate. It participates in amino-acid biosynthesis; L-tryptophan biosynthesis; L-tryptophan from chorismate: step 2/5. Catalyzes the transfer of the phosphoribosyl group of 5-phosphorylribose-1-pyrophosphate (PRPP) to anthranilate to yield N-(5'-phosphoribosyl)-anthranilate (PRA). This chain is Anthranilate phosphoribosyltransferase, found in Mycobacterium sp. (strain JLS).